We begin with the raw amino-acid sequence, 226 residues long: MSRVRLVIAQCTVDYIGRLTAHLPSARRLLLFKADGSVSVHADDRAYKPLNWMSPPCWLTEESGGQAPVWVVENKAGEQLRITIEGIEHDSSHELGVDPGLVKDGVEAHLQALLAEHIQLLGEGYTLVRREYMTAIGPVDLLCSDERGGSVAVEIKRRGEIDGVEQLTRYLELLNRDSVLAPVKGVFAAQQIKPQARILATDRGIRCLTLDYDTMRGMDSGEYRLF.

This sequence belongs to the NucS endonuclease family.

It is found in the cytoplasm. Cleaves both 3' and 5' ssDNA extremities of branched DNA structures. The polypeptide is Endonuclease NucS (Mycobacterium tuberculosis (strain ATCC 25618 / H37Rv)).